Here is a 349-residue protein sequence, read N- to C-terminus: DENN domain-containing protein 10 (349 aa).

Residues 1–135 (MATPELMLSL…TKGICQSDEN (135 aa)) form the uDENN domain. In terms of domain architecture, cDENN spans 160–294 (QFGMETIILY…ADRSDAQVIK (135 aa)). One can recognise a dDENN domain in the interval 296-349 (ISVKTKEILSNLMSLADHADNSKLTLECLKQGHYPPATENFLFHLAAAEQLLKI).

This sequence belongs to the DENND10 family.

The protein localises to the late endosome. Guanine nucleotide exchange factor (GEF) which may be involved in the regulation of late endocytic pathway homeostasis, including endosomal positioning, maturation and secretion. This is DENN domain-containing protein 10 (dennd10) from Danio rerio (Zebrafish).